A 257-amino-acid chain; its full sequence is Aspartate/glutamate leucyltransferase (257 aa).

It belongs to the R-transferase family. Bpt subfamily.

It is found in the cytoplasm. It carries out the reaction N-terminal L-glutamyl-[protein] + L-leucyl-tRNA(Leu) = N-terminal L-leucyl-L-glutamyl-[protein] + tRNA(Leu) + H(+). It catalyses the reaction N-terminal L-aspartyl-[protein] + L-leucyl-tRNA(Leu) = N-terminal L-leucyl-L-aspartyl-[protein] + tRNA(Leu) + H(+). Functions in the N-end rule pathway of protein degradation where it conjugates Leu from its aminoacyl-tRNA to the N-termini of proteins containing an N-terminal aspartate or glutamate. The sequence is that of Aspartate/glutamate leucyltransferase from Sphingopyxis alaskensis (strain DSM 13593 / LMG 18877 / RB2256) (Sphingomonas alaskensis).